Consider the following 40-residue polypeptide: Cytolysin EnT (40 aa).

The interval 3 to 12 is plays an important role in the hemolytic activity; that stretch reads ALAGTIIEGA. Residues 11–30 form an N-terminal region region; that stretch reads GASLTFSVLTTILDALGSVS.

Belongs to the actinoporin family. Sea anemone subfamily. Octamer or nonamer in membranes. Monomer in the soluble state.

It is found in the secreted. Its subcellular location is the nematocyst. The protein localises to the target cell membrane. Its function is as follows. Pore-forming protein that forms cations-selective hydrophilic pores of around 1 nm and causes cytolysis. Pore formation is a multi-step process that involves specific recognition of membrane sphingomyelin (but neither cholesterol nor phosphatidylcholine) using aromatic rich region and adjacent phosphocholine (POC) binding site, firm binding to the membrane (mainly driven by hydrophobic interactions) accompanied by the transfer of the N-terminal region to the lipid-water interface and finally pore formation after oligomerization of monomers. This toxin shows hemolytic activities. This Entacmaea quadricolor (Bubble-tip anemone) protein is Cytolysin EnT.